A 305-amino-acid polypeptide reads, in one-letter code: Protoheme IX farnesyltransferase (305 aa).

The next 9 membrane-spanning stretches (helical) occupy residues 38–58, 60–80, 110–130, 131–151, 161–181, 185–205, 227–247, 249–269, and 285–305; these read FITT…SFLG, LDIV…SCAI, AYAF…MTTV, TSAV…TMWS, IGSV…TGTI, AWVL…SLAI, VTKR…FFLG, LGWP…VIGL, and FVYS…ITLF.

Belongs to the UbiA prenyltransferase family. Protoheme IX farnesyltransferase subfamily. As to quaternary structure, interacts with CtaA.

The protein resides in the cell membrane. It carries out the reaction heme b + (2E,6E)-farnesyl diphosphate + H2O = Fe(II)-heme o + diphosphate. Its pathway is porphyrin-containing compound metabolism; heme O biosynthesis; heme O from protoheme: step 1/1. Its function is as follows. Converts heme B (protoheme IX) to heme O by substitution of the vinyl group on carbon 2 of heme B porphyrin ring with a hydroxyethyl farnesyl side group. This Bacillus pumilus (strain SAFR-032) protein is Protoheme IX farnesyltransferase.